We begin with the raw amino-acid sequence, 130 residues long: Small ribosomal subunit protein uS8 (130 aa).

This sequence belongs to the universal ribosomal protein uS8 family. As to quaternary structure, part of the 30S ribosomal subunit. Contacts proteins S5 and S12.

Its function is as follows. One of the primary rRNA binding proteins, it binds directly to 16S rRNA central domain where it helps coordinate assembly of the platform of the 30S subunit. This Teredinibacter turnerae (strain ATCC 39867 / T7901) protein is Small ribosomal subunit protein uS8.